The sequence spans 689 residues: MSEKTFLVEIGTEELPPKALRSLAESFAANFTAELDNAGLAHGNVEWFAAPRRLALKVANLAESQPDREVEKRGPAIAQAFDAEGKPSKAAEGWARGCGITVDQAERLKTDKGEWLLYRAHVKGESTEALVPNMVATSLAKLPIPKLMRWGASDVHFVRPVHTVTLLLGDKVIPATILGIQSDRVIRGHRFMGEPEFTIDNADQYPQILLERGKVIADYEARKAKIKADAEEAARKIGGNADLSESLLEEVASLVEWPVVLTAKFEEKFLAVPAEALVYTMKGDQKYFPVYDNAGKLLPNFIFVANIESKDPTQIISGNEKVVRPRLADAEFFFNTDRKKRLEDHLPRLQTVLFQQQLGTLRDKTDRIQALAGWIAGQIGADVNHATRAGLLSKCDLMTNMVFEFTDTQGVMGMHYARHDGEAEDVAVALNEQYQPRFAGDDLPSNPVACALAIADKMDTLAGIFGIGQHPKGDKDPFALRRAALGVLRIIVEKNLALDLQTLTEEAVRLYGDKLTNANVVDDVIDFMLGRFRAWYQDEGYTVDTIQAVLARRPTRPADFDARMKAVSHFRTLEEASALAAANKRVSNILAKATEPLNDIVHASVLKEAAEIELARHLVVLRDKLQPYFADGRYQEALIELAALRAPVDEFFENVMVNAEEKDIRINRLTLLSKLRELFLQVADISLLQ.

Belongs to the class-II aminoacyl-tRNA synthetase family. In terms of assembly, tetramer of two alpha and two beta subunits.

It is found in the cytoplasm. It catalyses the reaction tRNA(Gly) + glycine + ATP = glycyl-tRNA(Gly) + AMP + diphosphate. The chain is Glycine--tRNA ligase beta subunit from Salmonella heidelberg (strain SL476).